A 797-amino-acid polypeptide reads, in one-letter code: GDH/6PGL endoplasmic bifunctional protein (797 aa).

The N-terminal stretch at 1 to 24 (MKCPGVWGMLTVTMCVVFLGCPQA) is a signal peptide. Gln-25 is modified (pyrrolidone carboxylic acid). The segment at 25–531 (QELQGHVSVI…SGSHLSFSLG (507 aa)) is hexose-6-phosphate dehydrogenase. NADP(+) is bound by residues 37–44 (GATGDLAK) and Tyr-154. An N-linked (GlcNAc...) asparagine glycan is attached at Asn-162. Lys-179 contacts NADP(+). Residues Lys-179, 209 to 213 (HYLGK), Glu-248, and Asp-267 each bind D-glucose 6-phosphate. N6-succinyllysine is present on Lys-213. The active-site Proton acceptor is the His-272. Residue Asn-287 is glycosylated (N-linked (GlcNAc...) asparagine). Residues Lys-365 and Arg-370 each contribute to the D-glucose 6-phosphate site. Arg-375 serves as a coordination point for NADP(+). The linker stretch occupies residues 532–545 (QPEQLVPGPGSTPR). The 6-phosphogluconolactonase stretch occupies residues 546-797 (PSDFQVLGAK…WYMDYEAFLG (252 aa)). Residue Trp-623 participates in NADP(+) binding. The N-linked (GlcNAc...) asparagine glycan is linked to Asn-689.

In the N-terminal section; belongs to the glucose-6-phosphate dehydrogenase family. It in the C-terminal section; belongs to the glucosamine/galactosamine-6-phosphate isomerase family. 6-phosphogluconolactonase subfamily. Homodimer.

It is found in the endoplasmic reticulum lumen. The catalysed reaction is D-glucose 6-phosphate + NAD(+) = 6-phospho-D-glucono-1,5-lactone + NADH + H(+). It catalyses the reaction D-glucose 6-phosphate + NADP(+) = 6-phospho-D-glucono-1,5-lactone + NADPH + H(+). The enzyme catalyses 6-phospho-D-glucono-1,5-lactone + H2O = 6-phospho-D-gluconate + H(+). It carries out the reaction 2-deoxy-D-glucose 6-phosphate + NAD(+) = 2-deoxy-6-phospho-D-glucono-1,5-lactone + NADH + H(+). The catalysed reaction is 2-deoxy-D-glucose 6-phosphate + NADP(+) = 2-deoxy-6-phospho-D-glucono-1,5-lactone + NADPH + H(+). It catalyses the reaction D-galactose 6-phosphate + NADP(+) = 6-phospho-D-galactono-1,5-lactone + NADPH + H(+). The enzyme catalyses D-galactose 6-phosphate + NAD(+) = 6-phospho-D-galactono-1,5-lactone + NADH + H(+). It carries out the reaction D-glucosamine 6-phosphate + NADP(+) = 2-amino-2-deoxy-6-phospho-D-glucono-1,5-lactone + NADPH + 2 H(+). The catalysed reaction is D-glucose + NAD(+) = D-glucono-1,5-lactone + NADH + H(+). It catalyses the reaction D-glucose + NADP(+) = D-glucono-1,5-lactone + NADPH + H(+). The enzyme catalyses D-glucose 6-sulfate + NADP(+) = 6-sulfo-D-glucono-1,5-lactone + NADPH + H(+). Its pathway is carbohydrate degradation; pentose phosphate pathway; D-ribulose 5-phosphate from D-glucose 6-phosphate (oxidative stage). It participates in carbohydrate degradation; pentose phosphate pathway; D-ribulose 5-phosphate from D-glucose 6-phosphate (oxidative stage): step 2/3. Functionally, bifunctional enzyme localized in the lumen of the endoplasmic reticulum that catalyzes the first two steps of the oxidative branch of the pentose phosphate pathway/shunt, an alternative to glycolysis and a major source of reducing power and metabolic intermediates for biosynthetic processes. Has a hexose-6-phosphate dehydrogenase activity, with broad substrate specificity compared to glucose-6-phosphate 1-dehydrogenase/G6PD, and catalyzes the first step of the pentose phosphate pathway. In addition, acts as a 6-phosphogluconolactonase and catalyzes the second step of the pentose phosphate pathway. May have a dehydrogenase activity for alternative substrates including glucosamine 6-phosphate and glucose 6-sulfate. The main function of this enzyme is to provide reducing equivalents such as NADPH to maintain the adequate levels of reductive cofactors in the oxidizing environment of the endoplasmic reticulum. By producing NADPH that is needed by reductases of the lumen of the endoplasmic reticulum like corticosteroid 11-beta-dehydrogenase isozyme 1/HSD11B1, indirectly regulates their activity. This chain is GDH/6PGL endoplasmic bifunctional protein, found in Oryctolagus cuniculus (Rabbit).